We begin with the raw amino-acid sequence, 563 residues long: Lipase 2 (563 aa).

The first 19 residues, 1 to 19, serve as a signal peptide directing secretion; that stretch reads MVSKSLFLAAAVNLAGVLA. Position 20 is a pyrrolidone carboxylic acid (Gln20). Cys80 and Cys124 are oxidised to a cystine. Ser236 (acyl-ester intermediate) is an active-site residue. Cys295 and Cys307 form a disulfide bridge. Residue Asn302 is glycosylated (N-linked (GlcNAc...) asparagine). Residue Glu373 is the Charge relay system of the active site. N-linked (GlcNAc...) asparagine glycosylation is present at Asn383. Catalysis depends on His482, which acts as the Charge relay system.

This sequence belongs to the type-B carboxylesterase/lipase family. Monomer.

Its subcellular location is the secreted. It catalyses the reaction a triacylglycerol + H2O = a diacylglycerol + a fatty acid + H(+). Hydrolyzes all ester bonds in triglyceride and displays a high affinity for triolein. For unsaturated substrates having long fatty acyl chains (C18:2 cis-9, cis-12 and C18:3 cis-9, cis-12, cis-15) GCL I shows higher specific activity than GCL II, whereas GCL II shows higher specific activity against saturated substrates having short fatty acid chains (C8, C10, C12 and C14). The protein is Lipase 2 (LIP2) of Geotrichum candidum (Oospora lactis).